The primary structure comprises 497 residues: MDAMKYNDLRDFLTLLEQQGELKRITLPVDPHLEITEIADRTLRAGGPALLFENPKGYSMPVLCNLFGTPKRVAMGMGQEDVSALREVGKLLAFLKEPEPPKGFRDLFDKLPQFKQVLNMPTKRLRGVPCQQKIVSGDDVDLNRIPIMTCWPEDAAPLITWGLTVTRGPHKERQNLGIYRQQLIGKNKLIMRWLSHRGGALDYQEWCAAHPGERFPVSVALGADPATILGAVTPVPDTLSEYAFAGLLRGTKTEVVKCISNDLEVPASAEIVLEGYIEQGETAPEGPYGDHTGYYNEVDSFPVFTVTHITQREDAIYHSTYTGRPPDEPAVLGVALNEVFVPILQKQFPEIVDFYLPPEGCSYRLAVVTIKKQYAGHAKRVMMGVWSFLRQFMYTKFVIVCDDDVNARDWNDVIWAITTRMDPARDTVLVENTPIDYLDFASPVSGLGSKMGLDATNKWPGETQREWGRPIKKDPDVVAHIDAIWDELAIFNNGKSA.

Residue Asn175 participates in Mn(2+) binding. Prenylated FMN contacts are provided by residues 178–180 (IYR), 192–194 (RWL), and 197–198 (RG). Glu241 lines the Mn(2+) pocket. The active-site Proton donor is the Asp290.

This sequence belongs to the UbiD family. In terms of assembly, homohexamer. Requires prenylated FMN as cofactor. Mn(2+) serves as cofactor.

The protein resides in the cell membrane. It carries out the reaction a 4-hydroxy-3-(all-trans-polyprenyl)benzoate + H(+) = a 2-(all-trans-polyprenyl)phenol + CO2. The protein operates within cofactor biosynthesis; ubiquinone biosynthesis. Functionally, catalyzes the decarboxylation of 3-octaprenyl-4-hydroxy benzoate to 2-octaprenylphenol, an intermediate step in ubiquinone biosynthesis. The protein is 3-octaprenyl-4-hydroxybenzoate carboxy-lyase of Shigella boydii serotype 4 (strain Sb227).